The sequence spans 359 residues: Phosphate acyltransferase (359 aa).

Belongs to the PlsX family. Homodimer. Probably interacts with PlsY.

Its subcellular location is the cytoplasm. It catalyses the reaction a fatty acyl-[ACP] + phosphate = an acyl phosphate + holo-[ACP]. It participates in lipid metabolism; phospholipid metabolism. Functionally, catalyzes the reversible formation of acyl-phosphate (acyl-PO(4)) from acyl-[acyl-carrier-protein] (acyl-ACP). This enzyme utilizes acyl-ACP as fatty acyl donor, but not acyl-CoA. This Citrobacter koseri (strain ATCC BAA-895 / CDC 4225-83 / SGSC4696) protein is Phosphate acyltransferase.